Consider the following 310-residue polypeptide: Syntaxin-81 (310 aa).

Over 1 to 289 the chain is Cytoplasmic; that stretch reads MSRFRDRTED…QAIQRNSSSR (289 aa). Residues 77–114 adopt a coiled-coil conformation; sequence RTTEQEKDSIEQEVAAFIKACKEQIDILINSIRNEEAN. Residues 290 to 310 form a helical; Anchor for type IV membrane protein membrane-spanning segment; it reads TFLLLFFFVLTFSVLFLDWYS.

Belongs to the syntaxin family. Part of the t-SNARE complex. Interacts with MAG2.

It is found in the membrane. Functionally, vesicle trafficking protein that functions in the secretory pathway. The polypeptide is Syntaxin-81 (SYP81) (Arabidopsis thaliana (Mouse-ear cress)).